The sequence spans 273 residues: Peptidoglycan-N-acetylglucosamine deacetylase BC_1974 (273 aa).

A helical membrane pass occupies residues 10–30 (IVVVLIAIAAVAIGYYMFQSI). A NodB homology domain is found at 69-255 (KVAYLTFDDG…GLKEKGYEFE (187 aa)). D76 serves as the catalytic Proton acceptor. 3 residues coordinate Zn(2+): D77, H126, and H130. Residue H230 is the Proton donor of the active site.

This sequence belongs to the polysaccharide deacetylase family. It depends on Zn(2+) as a cofactor. The cofactor is Co(2+). Requires Ni(2+) as cofactor.

It is found in the cell membrane. The enzyme catalyses peptidoglycan-N-acetyl-D-glucosamine + H2O = peptidoglycan-D-glucosamine + acetate.. Inhibited by the hydroxamate N-hydroxy-4-(naphthalene-1-yl)benzamide (NHNB). Its function is as follows. Catalyzes the deacetylation of N-acetylglucosamine (GlcNAc) residues in peptidoglycan. The sequence is that of Peptidoglycan-N-acetylglucosamine deacetylase BC_1974 from Bacillus cereus (strain ATCC 14579 / DSM 31 / CCUG 7414 / JCM 2152 / NBRC 15305 / NCIMB 9373 / NCTC 2599 / NRRL B-3711).